We begin with the raw amino-acid sequence, 663 residues long: DNA topoisomerase 1 (663 aa).

In terms of domain architecture, Toprim spans 4–137; that stretch reads SWLIITEKDN…TVKVDRVRYS (134 aa). Residues Glu10 and Asp106 each coordinate Mg(2+). The 404-residue stretch at 155 to 558 folds into the Topo IA-type catalytic domain; sequence DFNLANAALA…ESREMLLQIL (404 aa). An interaction with DNA region spans residues 193 to 198; it reads SVGRVQ. Tyr306 (O-(5'-phospho-DNA)-tyrosine intermediate) is an active-site residue. A C4-type 1 zinc finger spans residues 583–610; the sequence is CPECGGELVVRQSKAGKRFIGCSNYPDC. A C4-type 2; atypical zinc finger spans residues 629 to 653; it reads CKEHEIKEVKIRTKKGYWNLGCPYC.

This sequence belongs to the type IA topoisomerase family. As to quaternary structure, monomer. It depends on Mg(2+) as a cofactor.

The enzyme catalyses ATP-independent breakage of single-stranded DNA, followed by passage and rejoining.. Releases the supercoiling and torsional tension of DNA, which is introduced during the DNA replication and transcription, by transiently cleaving and rejoining one strand of the DNA duplex. Introduces a single-strand break via transesterification at a target site in duplex DNA. The scissile phosphodiester is attacked by the catalytic tyrosine of the enzyme, resulting in the formation of a DNA-(5'-phosphotyrosyl)-enzyme intermediate and the expulsion of a 3'-OH DNA strand. The free DNA strand then undergoes passage around the unbroken strand, thus removing DNA supercoils. Finally, in the religation step, the DNA 3'-OH attacks the covalent intermediate to expel the active-site tyrosine and restore the DNA phosphodiester backbone. This chain is DNA topoisomerase 1, found in Archaeoglobus fulgidus (strain ATCC 49558 / DSM 4304 / JCM 9628 / NBRC 100126 / VC-16).